We begin with the raw amino-acid sequence, 247 residues long: Uridylate kinase (247 aa).

17–20 (KFSG) contributes to the ATP binding site. Gly59 contributes to the UMP binding site. ATP contacts are provided by Gly60 and Arg64. UMP-binding positions include Asp79 and 140 to 147 (TGNPFFTT). Positions 167, 173, and 176 each coordinate ATP.

The protein belongs to the UMP kinase family. Homohexamer.

It is found in the cytoplasm. The enzyme catalyses UMP + ATP = UDP + ADP. Its pathway is pyrimidine metabolism; CTP biosynthesis via de novo pathway; UDP from UMP (UMPK route): step 1/1. Inhibited by UTP. Its function is as follows. Catalyzes the reversible phosphorylation of UMP to UDP. In Legionella pneumophila (strain Paris), this protein is Uridylate kinase.